The primary structure comprises 796 residues: Cation/H(+) antiporter 6B (796 aa).

13 consecutive transmembrane segments (helical) span residues 54 to 74, 93 to 113, 131 to 151, 159 to 179, 194 to 213, 223 to 243, 259 to 279, 285 to 305, 310 to 330, 344 to 364, 382 to 402, 411 to 431, and 444 to 464; these read DFWE…FLLW, SMML…IPCL, IGAF…DVGI, SVVI…LLYS, YTVM…NMLL, FGQI…FLTV, LAFM…LWVI, GAPV…LSYL, FLFF…NGPP, EGIF…WSFL, FSFL…AALA, IILG…VLTA, and LLGV…HFLY.

This sequence belongs to the monovalent cation:proton antiporter 2 (CPA2) transporter (TC 2.A.37) family. CHX (TC 2.A.37.4) subfamily. Preferentially expressed in pollen.

The protein resides in the membrane. Its function is as follows. May operate as a cation/H(+) antiporter. The polypeptide is Cation/H(+) antiporter 6B (CHX6b) (Arabidopsis thaliana (Mouse-ear cress)).